Reading from the N-terminus, the 337-residue chain is Large ribosomal subunit protein uL10 (337 aa).

The tract at residues 309–337 (EEVVEEQEEVKEEEEEESDMASGLGALFG) is disordered. The segment covering 310–327 (EVVEEQEEVKEEEEEESD) has biased composition (acidic residues).

Belongs to the universal ribosomal protein uL10 family. As to quaternary structure, part of the 50S ribosomal subunit. Forms part of the ribosomal stalk which helps the ribosome interact with GTP-bound translation factors. Forms a heptameric L10(L12)2(L12)2(L12)2 complex, where L10 forms an elongated spine to which the L12 dimers bind in a sequential fashion.

Its function is as follows. Forms part of the ribosomal stalk, playing a central role in the interaction of the ribosome with GTP-bound translation factors. This chain is Large ribosomal subunit protein uL10, found in Methanococcoides burtonii (strain DSM 6242 / NBRC 107633 / OCM 468 / ACE-M).